The primary structure comprises 365 residues: MEVQLTNRQQHILWATVRHYIATAEPVGSKALVDEYDLGVSSATIRNVMGVLEKSGLLYQPHTSAGRIPSDSGYRIYVDQLITPGLRDAARTDVLAKEVELALQNRLHWEDWSLEAVLQGAAQILATVSGCISLITMPQTTTAILRHLQLMQIEANKIMLIVVTDDYETHSKLMNLSPTEEEAKLDADGIDHELKIVSNFLNTHLRGRSLLELATLDWSDLDQEFQRYGEFLKGSVTELTRRHLTPTTTQIMVRGVAEVLRQPEFSQLQQVQTIIQLLEEEQDQLWRLIFAEPETEEAGKSKVTVRIGTENPLEPIRTCTLITSTYRRGLLPVGSVGVLGPTRLDYDSAIAVVAAAADYLSDAFS.

Belongs to the HrcA family.

Functionally, negative regulator of class I heat shock genes (grpE-dnaK-dnaJ and groELS operons). Prevents heat-shock induction of these operons. The polypeptide is Heat-inducible transcription repressor HrcA (Nodularia spumigena).